We begin with the raw amino-acid sequence, 536 residues long: G-protein coupled receptor Mth2 (536 aa).

Intrachain disulfides connect cysteine 17-cysteine 71, cysteine 73-cysteine 78, cysteine 82-cysteine 177, cysteine 83-cysteine 96, and cysteine 138-cysteine 197. N-linked (GlcNAc...) asparagine glycans are attached at residues asparagine 24 and asparagine 33. Asparagine 103, asparagine 113, asparagine 118, asparagine 159, and asparagine 184 each carry an N-linked (GlcNAc...) asparagine glycan. A helical membrane pass occupies residues 212–232 (YAMMFSIPFMMLTIAVYLLIP). At 233–241 (ELRNQHGKS) the chain is on the cytoplasmic side. Residues 242–262 (LVCYLIGLTVGYSSLCYVQLY) form a helical membrane-spanning segment. The Extracellular segment spans residues 263-273 (QVDATGVTCKV). The helical transmembrane segment at 274–294 (FGYTAYFFFMGAYMWLSVISF) threads the bilayer. Residues 295 to 314 (DLWHNFRGTRGINRFQEKKR) lie on the Cytoplasmic side of the membrane. A helical membrane pass occupies residues 315–335 (FLFYSLYSWGIALVFLAFTYC). The Extracellular segment spans residues 336 to 365 (AQQLSNLPDNLKPGIGDGVYCWLDMSNWAA). Residues 366-386 (MIYFYGPILAIVVANTIMFIM) traverse the membrane as a helical segment. The Cytoplasmic portion of the chain corresponds to 387–417 (TAIKIHGVQREMARIIASENSTKNLRTEKDK). A helical transmembrane segment spans residues 418–438 (FGLFLRLFLIMGITWLTELIS). The Extracellular segment spans residues 439–449 (YFVGSDKGWSK). A helical transmembrane segment spans residues 450 to 470 (LFYISDLANAMQGFLIFMLFV). Over 471 to 536 (MKKKVKHLIT…VDPQKTTIFR (66 aa)) the chain is Cytoplasmic. A disordered region spans residues 487–506 (RDGSNQRQSQYSTKTTSSSV). The segment covering 492–505 (QRQSQYSTKTTSSS) has biased composition (low complexity).

The protein belongs to the G-protein coupled receptor 2 family. Mth subfamily. As to quaternary structure, homodimer.

Its subcellular location is the cell membrane. Its function is as follows. Involved in biological aging and stress response. Essential for adult survival. This is G-protein coupled receptor Mth2 (mth2) from Drosophila simulans (Fruit fly).